A 668-amino-acid polypeptide reads, in one-letter code: MSKDKALLRINQLKEQLNLWSKQYYVDDNPSVDDTEYDLALKELISLETLYPELITSDSPSQKVGGMVSEKFLKITHKTPMLSLGNVFSFDEFLDFNTQISKISNTLDNQYVAELKIDGLSISLVYENGSLVSAATRGNGVVGEDVTINARTIKSIPLKISKKERVEVRGEIYLSKAEFEKINQKRLLNNEDLFINPRNAAAGTLRQLDSKIVASRNLDAFLYYYISDDSNNLTQYQSILKLNELGFKTNKETMLCKNLDEIKAYIDKYTNLKNDLDYQIDGIVFKINDKNLQNSLGFTSKIPKWAIAYKFPAEIKQTKLLDIFATVGRTGKITYNAKLEPVFLMGAKISAATLNNAEYIKTKDLRINSIVKIKKAGDVIPEVIEAIKDEDFYKLEKFKPALYCPNCHSLLEKNENEVDQFCINSSCSMKILRSLQHFSSREAMNIVSLGDRSLEILFNLKIIQNISDIYKLEEYKDQILAIDNFGLKSYLNLIDSINMSKNNSLEKVLFGLGIRHIGSKTAKILARKYQNIDNLMSASYDELIQINSIGESLALSIIDWFKIEDNLKLIDELKSFNINFNYLGAKINSDSIIANKSFVITGTLTRPREEFKTLIENNAGKVIGSISKQTDYLLAGNNVGSKLEKAKKLGVKIIDEQQFFDLLKSEKG.

NAD(+) is bound by residues Asp34 to Asp38, Ser83 to Leu84, and Glu114. The N6-AMP-lysine intermediate role is filled by Lys116. Residues Arg137, Glu171, Lys286, and Lys310 each contribute to the NAD(+) site. Residues Cys404, Cys407, Cys422, and Cys427 each coordinate Zn(2+). In terms of domain architecture, BRCT spans Asn588–Gly668.

The protein belongs to the NAD-dependent DNA ligase family. LigA subfamily. Requires Mg(2+) as cofactor. Mn(2+) serves as cofactor.

It catalyses the reaction NAD(+) + (deoxyribonucleotide)n-3'-hydroxyl + 5'-phospho-(deoxyribonucleotide)m = (deoxyribonucleotide)n+m + AMP + beta-nicotinamide D-nucleotide.. Its function is as follows. DNA ligase that catalyzes the formation of phosphodiester linkages between 5'-phosphoryl and 3'-hydroxyl groups in double-stranded DNA using NAD as a coenzyme and as the energy source for the reaction. It is essential for DNA replication and repair of damaged DNA. In Mycoplasma mycoides subsp. mycoides SC (strain CCUG 32753 / NCTC 10114 / PG1), this protein is DNA ligase.